Here is a 377-residue protein sequence, read N- to C-terminus: E3 ubiquitin-protein ligase rififylin (377 aa).

The segment at 55 to 107 adopts an FYVE-type zinc-finger fold; the sequence is TGSEPSCKACGVHFASTTRKQTCLDCKKNFCMTCSSQEGNGPRLCLLCLRFRA. The SAP 1 domain maps to 115-134; that stretch reads LMKMKVKDLRDYLSLHDIST. Residues 176–249 are disordered; sequence LTQPQTSTVP…SVDSEDSFVP (74 aa). Residues 190-212 show a composition bias toward polar residues; that stretch reads GLPSSPAQVTSVPLAQDQETQQA. Acidic residues predominate over residues 235–245; the sequence is EDETQSVDSED. Phosphoserine is present on residues Ser-240, Ser-243, Ser-246, and Ser-254. An SAP 2 domain is found at 264-278; sequence IEGLTVRQLKEILAR. The RING-type zinc-finger motif lies at 330–365; the sequence is CKICMDSPIDCVLLECGHMVTCTKCGKRMNECPICR.

Interacts with CASP8 and CASP10. Interacts with RIPK1 (via protein kinase domain); involved in RIPK1 ubiquitination. Interacts with PRR5L. Interacts (via RING-type zinc finger) with p53/TP53; involved in p53/TP53 ubiquitination. Interacts (via RING-type zinc finger) with MDM2; the interaction stabilizes MDM2. In terms of processing, autoubiquitinated. Palmitoylated. Post-translationally, undergoes caspase-mediated cleavage upon death-receptor activation, by TNFSF10 for instance. May be mediated by the caspases CASP8 and CASP10 in a negative feedback loop. Ubiquitous. Detected in heart, brain, spleen, lung, liver, skeletal muscle, kidney, testis, thymus, whole embryo and embryonic stem cells.

Its subcellular location is the cytoplasm. It is found in the cytosol. The protein localises to the cell membrane. It localises to the recycling endosome membrane. It catalyses the reaction S-ubiquitinyl-[E2 ubiquitin-conjugating enzyme]-L-cysteine + [acceptor protein]-L-lysine = [E2 ubiquitin-conjugating enzyme]-L-cysteine + N(6)-ubiquitinyl-[acceptor protein]-L-lysine.. It participates in protein modification; protein ubiquitination. Its function is as follows. E3 ubiquitin-protein ligase that regulates several biological processes through the ubiquitin-mediated proteasomal degradation of various target proteins. Mediates 'Lys-48'-linked polyubiquitination of PRR5L and its subsequent proteasomal degradation thereby indirectly regulating cell migration through the mTORC2 complex. Also ubiquitinates the caspases CASP8 and CASP10, promoting their proteasomal degradation, to negatively regulate apoptosis downstream of death domain receptors. Also negatively regulates the tumor necrosis factor-mediated signaling pathway through targeting of RIPK1 to ubiquitin-mediated proteasomal degradation. Negatively regulates p53/TP53 through its direct ubiquitination and targeting to proteasomal degradation. Indirectly, may also negatively regulate p53/TP53 through ubiquitination and degradation of SFN. May also play a role in endocytic recycling. The sequence is that of E3 ubiquitin-protein ligase rififylin from Mus musculus (Mouse).